We begin with the raw amino-acid sequence, 292 residues long: UDP-3-O-acyl-N-acetylglucosamine deacetylase (292 aa).

The Zn(2+) site is built by histidine 75, histidine 231, and aspartate 235. The active-site Proton donor is histidine 258.

Belongs to the LpxC family. The cofactor is Zn(2+).

It carries out the reaction a UDP-3-O-[(3R)-3-hydroxyacyl]-N-acetyl-alpha-D-glucosamine + H2O = a UDP-3-O-[(3R)-3-hydroxyacyl]-alpha-D-glucosamine + acetate. Its pathway is glycolipid biosynthesis; lipid IV(A) biosynthesis; lipid IV(A) from (3R)-3-hydroxytetradecanoyl-[acyl-carrier-protein] and UDP-N-acetyl-alpha-D-glucosamine: step 2/6. Its function is as follows. Catalyzes the hydrolysis of UDP-3-O-myristoyl-N-acetylglucosamine to form UDP-3-O-myristoylglucosamine and acetate, the committed step in lipid A biosynthesis. The sequence is that of UDP-3-O-acyl-N-acetylglucosamine deacetylase from Nautilia profundicola (strain ATCC BAA-1463 / DSM 18972 / AmH).